Here is a 604-residue protein sequence, read N- to C-terminus: Cell division cycle protein CDT1 (604 aa).

This sequence belongs to the Cdt1 family. As to quaternary structure, associates with the MCM2-7 complex. Interacts with MCM2, ORC1, ORC2 and ORC6.

It localises to the cytoplasm. The protein localises to the nucleus. DNA replication licensing factor, required for pre-replication complex assembly. Faithful duplication of the genetic material requires 'once per cell cycle' DNA replication initiation and elongation. Central to this control is the tightly regulated formation of prereplicative complexes (preRCs) at future origins of DNA replication. Required for the recruitment of the MCM2-7 helicase complex to the replication origins. The chain is Cell division cycle protein CDT1 (TAH11) from Saccharomyces cerevisiae (strain ATCC 204508 / S288c) (Baker's yeast).